Here is a 1166-residue protein sequence, read N- to C-terminus: Serine-aspartate repeat-containing protein E (1166 aa).

A signal peptide spans 1-52; the sequence is MINRDNKKAITKKGMISNRLNKFSIRKYTVGTASILVGTTLIFGLGNQEAKA. The YSIRK-G/S signaling motif signature appears at 23–34; it reads FSIRKYTVGTAS. The ligand binding A region stretch occupies residues 53–606; sequence AENTSTENAK…GDGTVKPEEK (554 aa). The segment at 54 to 253 is disordered; sequence ENTSTENAKQ…HSTKPVATAP (200 aa). Residues 61–75 are compositionally biased toward basic and acidic residues; that stretch reads AKQDDATTSDNKEVV. Low complexity predominate over residues 77–90; it reads ETENNSTTENNSTN. Residues 92–108 show a composition bias toward basic and acidic residues; sequence IKKETNTDSQPEAKKES. Positions 118 to 129 are enriched in polar residues; the sequence is NNVTATTETKPQ. The segment covering 130–145 has biased composition (basic and acidic residues); sequence NIEKENVKPSTDKTAT. Over residues 166–178 the composition is skewed to low complexity; sequence TTKPSTSEPSTSE. Polar residues predominate over residues 179–212; that stretch reads IQTKPTTPQESTNIENSQPQPTPSKVDNQVTDAT. Residues 221–246 are compositionally biased toward basic and acidic residues; it reads SKEELKKNPEKLKELVRNDSNTDHST. 3 CNA-B domains span residues 607–719, 720–829, and 830–940; these read LYKI…YKEP, KYNL…YKTP, and KYSL…EEDT. A disordered region spans residues 904–1141; sequence VTNTTEDDKD…TGSENNGSNN (238 aa). Composition is skewed to acidic residues over residues 908–918 and 935–1105; these read TEDDKDADGGE and YFEE…DSDS. An LPXTG sorting signal motif is present at residues 1129–1133; sequence LPETG. A Pentaglycyl murein peptidoglycan amidated threonine modification is found at Thr1132. A propeptide spans 1133-1166 (removed by sortase); sequence GSENNGSNNATLFGGLFAALGSLLLFGRRKKQNK.

It belongs to the serine-aspartate repeat-containing protein (SDr) family. Interacts with host complement factor H/CFAH (via C-terminus). Interacts with host complement regulator C4BPA.

Its subcellular location is the secreted. It localises to the cell wall. Cell surface-associated calcium-binding protein which plays an important role in adhesion and pathogenesis. Contributes to the resistance to killing by innate immune components in blood and thus attenuates bacterial clearance by interacting with host complement factor H/CFAH and modulating its activity. Also inhibits bacterial opsonization and killing by interacting with host complement regulator C4BPA and thus inhibiting classical complement pathway activation. This Staphylococcus aureus (strain COL) protein is Serine-aspartate repeat-containing protein E (sdrE).